The sequence spans 259 residues: DNA-directed RNA polymerase subunit Rpo3 (259 aa).

Belongs to the archaeal Rpo3/eukaryotic RPB3 RNA polymerase subunit family. In terms of assembly, part of the RNA polymerase complex.

The protein localises to the cytoplasm. It catalyses the reaction RNA(n) + a ribonucleoside 5'-triphosphate = RNA(n+1) + diphosphate. In terms of biological role, DNA-dependent RNA polymerase (RNAP) catalyzes the transcription of DNA into RNA using the four ribonucleoside triphosphates as substrates. This is DNA-directed RNA polymerase subunit Rpo3 from Thermococcus kodakarensis (strain ATCC BAA-918 / JCM 12380 / KOD1) (Pyrococcus kodakaraensis (strain KOD1)).